A 358-amino-acid polypeptide reads, in one-letter code: Alanine racemase (358 aa).

K34 acts as the Proton acceptor; specific for D-alanine in catalysis. K34 carries the post-translational modification N6-(pyridoxal phosphate)lysine. R129 is a substrate binding site. The active-site Proton acceptor; specific for L-alanine is the Y254. M302 lines the substrate pocket.

The protein belongs to the alanine racemase family. It depends on pyridoxal 5'-phosphate as a cofactor.

The catalysed reaction is L-alanine = D-alanine. The protein operates within amino-acid biosynthesis; D-alanine biosynthesis; D-alanine from L-alanine: step 1/1. Functionally, catalyzes the interconversion of L-alanine and D-alanine. May also act on other amino acids. In Vibrio vulnificus (strain CMCP6), this protein is Alanine racemase (alr).